The following is a 192-amino-acid chain: Mitochondrial import inner membrane translocase subunit TIM18 (192 aa).

A mitochondrion-targeting transit peptide spans 1–42 (MLLFPGLKPVLNASTVIVNPVRAVFPGLVLSTKRSFYSINRL). At 43 to 88 (NAENKINDIANTSKEASSSVQMFKPPEFSQFKDSYQKDYERIAKYT) the chain is on the mitochondrial matrix side. A helical membrane pass occupies residues 89 to 109 (LIPLTMVPFYASFTGGVINPL). Topologically, residues 110–113 (LDAS) are mitochondrial intermembrane. Residues 114–134 (LSSIFLIYLQYGFTSCIIDYI) form a helical membrane-spanning segment. The Mitochondrial matrix portion of the chain corresponds to 135-144 (PKEKYPRWHK). A helical transmembrane segment spans residues 145 to 165 (LALYCLYGGSMLSLYGIYELE). Residues 166–192 (TKNNGFVDLVKKLWNENDDHLYIFGRN) are Mitochondrial intermembrane-facing.

It belongs to the CybS family. Component of the TIM22 complex, whose core is composed of TIM18, TIM22 and TIM54, associated with the peripheral proteins MRS5/TIM12 and the 70 kDa heterohexamer composed of TIM9 and TIM10 (or TIM8 and TIM13).

It is found in the mitochondrion inner membrane. Functionally, component of the TIM22 complex, a complex that mediates the import and insertion of multi-pass transmembrane proteins into the mitochondrial inner membrane. The TIM22 complex forms a twin-pore translocase that uses the membrane potential as external driving force. Its role in the complex is unclear but it may be involved in the assembly and stabilization of the TIM22 complex. This chain is Mitochondrial import inner membrane translocase subunit TIM18 (TIM18), found in Saccharomyces cerevisiae (strain ATCC 204508 / S288c) (Baker's yeast).